The sequence spans 341 residues: Ketol-acid reductoisomerase (NADP(+)) (341 aa).

Residues 2 to 181 (AKVYYNGDAN…GAARAGVLET (180 aa)) enclose the KARI N-terminal Rossmann domain. NADP(+)-binding positions include 25–28 (YGSQ), R48, S52, and 82–85 (DEKQ). The active site involves H107. G133 is a binding site for NADP(+). In terms of domain architecture, KARI C-terminal knotted spans 182-327 (TFKEETETDL…RELRSMMPFV (146 aa)). Residues D190, E194, E226, and E230 each coordinate Mg(2+). Residue S251 participates in substrate binding.

It belongs to the ketol-acid reductoisomerase family. Mg(2+) is required as a cofactor.

It carries out the reaction (2R)-2,3-dihydroxy-3-methylbutanoate + NADP(+) = (2S)-2-acetolactate + NADPH + H(+). The enzyme catalyses (2R,3R)-2,3-dihydroxy-3-methylpentanoate + NADP(+) = (S)-2-ethyl-2-hydroxy-3-oxobutanoate + NADPH + H(+). It participates in amino-acid biosynthesis; L-isoleucine biosynthesis; L-isoleucine from 2-oxobutanoate: step 2/4. Its pathway is amino-acid biosynthesis; L-valine biosynthesis; L-valine from pyruvate: step 2/4. Its function is as follows. Involved in the biosynthesis of branched-chain amino acids (BCAA). Catalyzes an alkyl-migration followed by a ketol-acid reduction of (S)-2-acetolactate (S2AL) to yield (R)-2,3-dihydroxy-isovalerate. In the isomerase reaction, S2AL is rearranged via a Mg-dependent methyl migration to produce 3-hydroxy-3-methyl-2-ketobutyrate (HMKB). In the reductase reaction, this 2-ketoacid undergoes a metal-dependent reduction by NADPH to yield (R)-2,3-dihydroxy-isovalerate. This Geobacillus thermodenitrificans (strain NG80-2) protein is Ketol-acid reductoisomerase (NADP(+)).